The sequence spans 213 residues: Probable nicotinate-nucleotide adenylyltransferase (213 aa).

Belongs to the NadD family.

It catalyses the reaction nicotinate beta-D-ribonucleotide + ATP + H(+) = deamido-NAD(+) + diphosphate. It participates in cofactor biosynthesis; NAD(+) biosynthesis; deamido-NAD(+) from nicotinate D-ribonucleotide: step 1/1. In terms of biological role, catalyzes the reversible adenylation of nicotinate mononucleotide (NaMN) to nicotinic acid adenine dinucleotide (NaAD). In Shigella boydii serotype 4 (strain Sb227), this protein is Probable nicotinate-nucleotide adenylyltransferase.